Reading from the N-terminus, the 255-residue chain is Small ribosomal subunit protein eS1 (255 aa).

The span at 1–18 shows a compositional bias: basic residues; the sequence is MAVGKNKRLSKGKKGLKK. The interval 1–28 is disordered; that stretch reads MAVGKNKRLSKGKKGLKKRTQDPFSRKD. Residue Ala2 is modified to N-acetylalanine; partial. Residues 19 to 28 show a composition bias toward basic and acidic residues; sequence RTQDPFSRKD.

Belongs to the eukaryotic ribosomal protein eS1 family. In terms of assembly, component of the small ribosomal subunit. Mature ribosomes consist of a small (40S) and a large (60S) subunit. The 40S subunit contains about 33 different proteins and 1 molecule of RNA (18S). The 60S subunit contains about 49 different proteins and 3 molecules of RNA (25S, 5.8S and 5S).

The protein localises to the cytoplasm. In Ajellomyces capsulatus (strain H143) (Darling's disease fungus), this protein is Small ribosomal subunit protein eS1.